A 159-amino-acid polypeptide reads, in one-letter code: Nucleoside diphosphate kinase (159 aa).

K14, F62, R90, T96, and R107 together coordinate ATP. The Pros-phosphohistidine intermediate role is filled by H123.

Belongs to the NDK family. The cofactor is Mg(2+).

It localises to the cytoplasm. It carries out the reaction a 2'-deoxyribonucleoside 5'-diphosphate + ATP = a 2'-deoxyribonucleoside 5'-triphosphate + ADP. The enzyme catalyses a ribonucleoside 5'-diphosphate + ATP = a ribonucleoside 5'-triphosphate + ADP. Its function is as follows. Major role in the synthesis of nucleoside triphosphates other than ATP. The ATP gamma phosphate is transferred to the NDP beta phosphate via a ping-pong mechanism, using a phosphorylated active-site intermediate. The polypeptide is Nucleoside diphosphate kinase (Pyrococcus abyssi (strain GE5 / Orsay)).